The primary structure comprises 420 residues: CinA-like protein (420 aa).

This sequence belongs to the CinA family.

The chain is CinA-like protein from Chlorobium phaeobacteroides (strain BS1).